Here is a 127-residue protein sequence, read N- to C-terminus: I-Kappa-B like protein J1 (127 aa).

2 ANK repeats span residues 43 to 76 (HGNT…DLDE) and 81 to 111 (DGDT…RFGS).

This sequence belongs to the polydnaviridae I-Kappa-B-like protein family.

Suppresses the host immune response through NF-kappa-B inactivation. Possesses ankyrin repeat domains required for NF-kappa-B binding but lacks the regulatory regions required for dissociation from NF-kappa-B and degradation. Therefore, prevents host NF-kappa-B release and subsequent activation. The sequence is that of I-Kappa-B like protein J1 (J2) from Microplitis demolitor (Parasitoid wasp).